A 164-amino-acid chain; its full sequence is Proline-rich protein 2 (164 aa).

Residues 1–21 (MNLKVGIAVLIIALIVPSAQP) form the signal peptide.

As to expression, component of the acid-soluble organic matrix of calcified layers of the shell (at protein level).

The protein localises to the secreted. This Lottia gigantea (Giant owl limpet) protein is Proline-rich protein 2.